Reading from the N-terminus, the 267-residue chain is Undecaprenyl-diphosphatase (267 aa).

8 helical membrane-spanning segments follow: residues 1–21 (MTLF…FLPV), 40–60 (GLAI…LYFW), 83–103 (AFLA…GLII), 111–131 (MMRS…VLYW), 144–164 (GWTL…LIPG), 189–209 (AMLM…ADVI), 219–239 (DGAL…ALMM), and 245–265 (VSFT…LVYA).

The protein belongs to the UppP family.

Its subcellular location is the cell inner membrane. It catalyses the reaction di-trans,octa-cis-undecaprenyl diphosphate + H2O = di-trans,octa-cis-undecaprenyl phosphate + phosphate + H(+). Catalyzes the dephosphorylation of undecaprenyl diphosphate (UPP). Confers resistance to bacitracin. The sequence is that of Undecaprenyl-diphosphatase from Roseobacter denitrificans (strain ATCC 33942 / OCh 114) (Erythrobacter sp. (strain OCh 114)).